A 37-amino-acid chain; its full sequence is Kappa-actitoxin-Bcs3b (37 aa).

Positions 2–37 (CKDGFPTATCQHAKLVGNCKNSQKYRANCAKTCGPC) constitute a ShKT domain. Cystine bridges form between C2–C37, C11–C30, and C20–C34. Residues 25–26 (KY) form a crucial for binding to potassium channels region.

The protein belongs to the sea anemone type 1 potassium channel toxin family. Type 1b subfamily.

Its subcellular location is the secreted. The protein localises to the nematocyst. In terms of biological role, inhibits voltage-gated potassium channels (IC(50)=14.42 nM for rKCNA1/Kv1.1, IC(50)=80.4 nM for rKCNA2/Kv1.2, IC(50)=7.76 nM for rKCNA6/Kv1.6, IC(50)=13.12 nM for hKCNA3/Kv1.3, and IC(50)=49.14 nM for insect Shaker IR). Binds the Shaker IR channels in a voltage-independent manner. The sequence is that of Kappa-actitoxin-Bcs3b from Bunodosoma caissarum (Sea anemone).